The following is a 488-amino-acid chain: UDP-N-acetylmuramoyl-L-alanyl-D-glutamate--2,6-diaminopimelate ligase (488 aa).

Residues L24, S26, and 41-43 contribute to the UDP-N-acetyl-alpha-D-muramoyl-L-alanyl-D-glutamate site; that span reads HQV. 113–119 serves as a coordination point for ATP; it reads GTNGKTT. UDP-N-acetyl-alpha-D-muramoyl-L-alanyl-D-glutamate contacts are provided by residues N154, 155–156, S182, Q188, and R190; that span reads TT. At K222 the chain carries N6-carboxylysine. Meso-2,6-diaminopimelate is bound by residues R386, 410 to 413, G461, and E465; that span reads DNPR. Residues 410–413 carry the Meso-diaminopimelate recognition motif motif; that stretch reads DNPR.

This sequence belongs to the MurCDEF family. MurE subfamily. The cofactor is Mg(2+). In terms of processing, carboxylation is probably crucial for Mg(2+) binding and, consequently, for the gamma-phosphate positioning of ATP.

The protein resides in the cytoplasm. It catalyses the reaction UDP-N-acetyl-alpha-D-muramoyl-L-alanyl-D-glutamate + meso-2,6-diaminopimelate + ATP = UDP-N-acetyl-alpha-D-muramoyl-L-alanyl-gamma-D-glutamyl-meso-2,6-diaminopimelate + ADP + phosphate + H(+). The protein operates within cell wall biogenesis; peptidoglycan biosynthesis. Catalyzes the addition of meso-diaminopimelic acid to the nucleotide precursor UDP-N-acetylmuramoyl-L-alanyl-D-glutamate (UMAG) in the biosynthesis of bacterial cell-wall peptidoglycan. The sequence is that of UDP-N-acetylmuramoyl-L-alanyl-D-glutamate--2,6-diaminopimelate ligase from Haemophilus influenzae (strain 86-028NP).